Reading from the N-terminus, the 211-residue chain is V-type ATP synthase subunit D (211 aa).

Belongs to the V-ATPase D subunit family.

Its function is as follows. Produces ATP from ADP in the presence of a proton gradient across the membrane. The protein is V-type ATP synthase subunit D of Enterococcus faecalis (strain ATCC 700802 / V583).